We begin with the raw amino-acid sequence, 139 residues long: 6,7-dimethyl-8-ribityllumazine synthase (139 aa).

Residues Phe-11, 42–44 (ALE), and 66–68 (VVI) contribute to the 5-amino-6-(D-ribitylamino)uracil site. 71-72 (ET) contacts (2S)-2-hydroxy-3-oxobutyl phosphate. The active-site Proton donor is His-74. Residue Asn-98 coordinates 5-amino-6-(D-ribitylamino)uracil. Arg-112 contacts (2S)-2-hydroxy-3-oxobutyl phosphate.

The protein belongs to the DMRL synthase family.

The catalysed reaction is (2S)-2-hydroxy-3-oxobutyl phosphate + 5-amino-6-(D-ribitylamino)uracil = 6,7-dimethyl-8-(1-D-ribityl)lumazine + phosphate + 2 H2O + H(+). Its pathway is cofactor biosynthesis; riboflavin biosynthesis; riboflavin from 2-hydroxy-3-oxobutyl phosphate and 5-amino-6-(D-ribitylamino)uracil: step 1/2. Its function is as follows. Catalyzes the formation of 6,7-dimethyl-8-ribityllumazine by condensation of 5-amino-6-(D-ribitylamino)uracil with 3,4-dihydroxy-2-butanone 4-phosphate. This is the penultimate step in the biosynthesis of riboflavin. The polypeptide is 6,7-dimethyl-8-ribityllumazine synthase (Novosphingobium aromaticivorans (strain ATCC 700278 / DSM 12444 / CCUG 56034 / CIP 105152 / NBRC 16084 / F199)).